The following is a 345-amino-acid chain: Heat-inducible transcription repressor HrcA (345 aa).

Belongs to the HrcA family.

In terms of biological role, negative regulator of class I heat shock genes (grpE-dnaK-dnaJ and groELS operons). Prevents heat-shock induction of these operons. This chain is Heat-inducible transcription repressor HrcA, found in Dehalococcoides mccartyi (strain ATCC BAA-2266 / KCTC 15142 / 195) (Dehalococcoides ethenogenes (strain 195)).